An 81-amino-acid polypeptide reads, in one-letter code: Photosystem I iron-sulfur center (81 aa).

4Fe-4S ferredoxin-type domains are found at residues serine 2 to tryptophan 31 and glycine 37 to tyrosine 68. Residues cysteine 11, cysteine 14, cysteine 17, cysteine 21, cysteine 48, cysteine 51, cysteine 54, and cysteine 58 each contribute to the [4Fe-4S] cluster site.

As to quaternary structure, the cyanobacterial PSI reaction center is composed of one copy each of PsaA,B,C,D,E,F,I,J,K,L,M and X, and forms trimeric complexes. [4Fe-4S] cluster is required as a cofactor.

The protein resides in the cellular thylakoid membrane. It carries out the reaction reduced [plastocyanin] + hnu + oxidized [2Fe-2S]-[ferredoxin] = oxidized [plastocyanin] + reduced [2Fe-2S]-[ferredoxin]. Apoprotein for the two 4Fe-4S centers FA and FB of photosystem I (PSI); essential for photochemical activity. FB is the terminal electron acceptor of PSI, donating electrons to ferredoxin. The C-terminus interacts with PsaA/B/D and helps assemble the protein into the PSI complex. Required for binding of PsaD and PsaE to PSI. PSI is a plastocyanin/cytochrome c6-ferredoxin oxidoreductase, converting photonic excitation into a charge separation, which transfers an electron from the donor P700 chlorophyll pair to the spectroscopically characterized acceptors A0, A1, FX, FA and FB in turn. The chain is Photosystem I iron-sulfur center from Trichodesmium erythraeum (strain IMS101).